Reading from the N-terminus, the 129-residue chain is Holo-[acyl-carrier-protein] synthase (129 aa).

Mg(2+) contacts are provided by Asp8 and Glu60.

It belongs to the P-Pant transferase superfamily. AcpS family. The cofactor is Mg(2+).

It is found in the cytoplasm. The enzyme catalyses apo-[ACP] + CoA = holo-[ACP] + adenosine 3',5'-bisphosphate + H(+). Transfers the 4'-phosphopantetheine moiety from coenzyme A to a Ser of acyl-carrier-protein. The sequence is that of Holo-[acyl-carrier-protein] synthase from Anaeromyxobacter sp. (strain Fw109-5).